The following is a 178-amino-acid chain: Nucleolar protein 16 (178 aa).

Positions 1–31 (MPKAKGKTRRQKFGYSVNRKRLNRNARRKAA) are disordered. Threonine 8 is modified (phosphothreonine). Serine 16 is modified (phosphoserine). A Glycyl lysine isopeptide (Lys-Gly) (interchain with G-Cter in SUMO2) cross-link involves residue lysine 74. Lysine 90 bears the N6-acetyllysine mark. Threonine 144 carries the phosphothreonine modification. Glycyl lysine isopeptide (Lys-Gly) (interchain with G-Cter in SUMO2) cross-links involve residues phenylalanine 166, leucine 167, lysine 172, and arginine 173.

It belongs to the NOP16 family.

Its subcellular location is the nucleus. The protein resides in the nucleolus. The chain is Nucleolar protein 16 (NOP16) from Homo sapiens (Human).